The following is a 299-amino-acid chain: Putative beta-glucosidase 2 (299 aa).

The first 16 residues, 1–16 (MLHCITTIFLSISRMT), serve as a signal peptide directing secretion. 49–50 (NE) serves as a coordination point for a beta-D-glucoside. Glu50 serves as the catalytic Proton donor. Cys69 and Cys72 are disulfide-bonded. Asn71 and Asn76 each carry an N-linked (GlcNAc...) asparagine glycan. Tyr189 is an a beta-D-glucoside binding site. Asn222 is a glycosylation site (N-linked (GlcNAc...) asparagine). A beta-D-glucoside is bound at residue Glu255. Catalysis depends on Glu255, which acts as the Nucleophile. Asn290 carries an N-linked (GlcNAc...) asparagine glycan.

This sequence belongs to the glycosyl hydrolase 1 family.

It catalyses the reaction Hydrolysis of terminal, non-reducing beta-D-glucosyl residues with release of beta-D-glucose.. This chain is Putative beta-glucosidase 2, found in Arabidopsis thaliana (Mouse-ear cress).